Here is a 397-residue protein sequence, read N- to C-terminus: Phosphoglycerate kinase (397 aa).

Substrate is bound by residues 21–23 (DFN), R37, 60–63 (HLGR), R119, and R152. ATP contacts are provided by residues K203, G294, E325, and 354–357 (GGDS).

The protein belongs to the phosphoglycerate kinase family. As to quaternary structure, monomer.

It localises to the cytoplasm. The catalysed reaction is (2R)-3-phosphoglycerate + ATP = (2R)-3-phospho-glyceroyl phosphate + ADP. It participates in carbohydrate degradation; glycolysis; pyruvate from D-glyceraldehyde 3-phosphate: step 2/5. This Chlorobium phaeobacteroides (strain BS1) protein is Phosphoglycerate kinase.